The primary structure comprises 285 residues: Elongation factor Ts (285 aa).

The involved in Mg(2+) ion dislocation from EF-Tu stretch occupies residues threonine 82 to valine 85.

Belongs to the EF-Ts family.

It localises to the cytoplasm. Associates with the EF-Tu.GDP complex and induces the exchange of GDP to GTP. It remains bound to the aminoacyl-tRNA.EF-Tu.GTP complex up to the GTP hydrolysis stage on the ribosome. In Sodalis glossinidius (strain morsitans), this protein is Elongation factor Ts.